The primary structure comprises 146 residues: Large ribosomal subunit protein uL15 (146 aa).

A compositionally biased stretch (basic and acidic residues) spans 1–13 (MKLHELHSAEGSR). The disordered stretch occupies residues 1 to 55 (MKLHELHSAEGSRRNRKRVGRGTSSGYGKTSGRGQKGQLARQGGHTRLGFEGGQM). Residues 23–35 (TSSGYGKTSGRGQ) are compositionally biased toward gly residues.

It belongs to the universal ribosomal protein uL15 family. Part of the 50S ribosomal subunit.

Binds to the 23S rRNA. In Lactobacillus helveticus (strain DPC 4571), this protein is Large ribosomal subunit protein uL15.